The primary structure comprises 135 residues: Holo-[acyl-carrier-protein] synthase (135 aa).

D8 and E57 together coordinate Mg(2+).

It belongs to the P-Pant transferase superfamily. AcpS family. It depends on Mg(2+) as a cofactor.

It localises to the cytoplasm. It catalyses the reaction apo-[ACP] + CoA = holo-[ACP] + adenosine 3',5'-bisphosphate + H(+). Transfers the 4'-phosphopantetheine moiety from coenzyme A to a Ser of acyl-carrier-protein. The sequence is that of Holo-[acyl-carrier-protein] synthase from Xanthobacter autotrophicus (strain ATCC BAA-1158 / Py2).